Reading from the N-terminus, the 215-residue chain is UPF0056 membrane protein bbp_248 (215 aa).

The next 6 membrane-spanning stretches (helical) occupy residues 10–32 (IYIS…PIFT), 52–74 (FSVA…LFGI), 78–100 (SFRI…GNFI), 119–141 (ISIV…TIVW), 151–169 (IFGC…WTLF), and 190–207 (IMGL…LAGL).

It belongs to the UPF0056 (MarC) family.

It localises to the cell membrane. The chain is UPF0056 membrane protein bbp_248 from Buchnera aphidicola subsp. Baizongia pistaciae (strain Bp).